A 453-amino-acid chain; its full sequence is Chromosomal replication initiator protein DnaA (453 aa).

The tract at residues 1-74 (MKEKQFWNRI…GFEIYDAEIT (74 aa)) is domain I, interacts with DnaA modulators. The segment at 74–113 (TPHYIFTKPQDTTSSQVEEATNLTLYNYSPKLVSIPYSDT) is domain II. Residues 114-331 (GLKEKYTFDN…GAINDITLIA (218 aa)) are domain III, AAA+ region. Residues G158, G160, K161, and T162 each coordinate ATP. Residues 332 to 453 (RVKKIKDITI…EIESIKKKIK (122 aa)) are domain IV, binds dsDNA.

The protein belongs to the DnaA family. As to quaternary structure, oligomerizes as a right-handed, spiral filament on DNA at oriC.

It localises to the cytoplasm. Plays an essential role in the initiation and regulation of chromosomal replication. ATP-DnaA binds to the origin of replication (oriC) to initiate formation of the DNA replication initiation complex once per cell cycle. Binds the DnaA box (a 9 base pair repeat at the origin) and separates the double-stranded (ds)DNA. Forms a right-handed helical filament on oriC DNA; dsDNA binds to the exterior of the filament while single-stranded (ss)DNA is stabiized in the filament's interior. The ATP-DnaA-oriC complex binds and stabilizes one strand of the AT-rich DNA unwinding element (DUE), permitting loading of DNA polymerase. After initiation quickly degrades to an ADP-DnaA complex that is not apt for DNA replication. Binds acidic phospholipids. This Streptococcus pneumoniae serotype 19F (strain G54) protein is Chromosomal replication initiator protein DnaA.